Here is a 126-residue protein sequence, read N- to C-terminus: MAILGMGTDIVEIARVQAIIARSGDKLAHRILTPLELSEYQQHQQPVRFIAKRFAAKEAAAKALGTGFRNGLELRHFQVIHDELGKPHLLVSDKANEMAVRLSVKSWHLSISDERHYAIALVIVEG.

Mg(2+) is bound by residues Asp9 and Glu58.

Belongs to the P-Pant transferase superfamily. AcpS family. Mg(2+) is required as a cofactor.

The protein localises to the cytoplasm. The enzyme catalyses apo-[ACP] + CoA = holo-[ACP] + adenosine 3',5'-bisphosphate + H(+). Functionally, transfers the 4'-phosphopantetheine moiety from coenzyme A to a Ser of acyl-carrier-protein. The protein is Holo-[acyl-carrier-protein] synthase of Hamiltonella defensa subsp. Acyrthosiphon pisum (strain 5AT).